We begin with the raw amino-acid sequence, 935 residues long: MTELKAKGLRAPHVAGSPSSPKVGSPLPCRQATGQFPGSQTSDTLPEVSALPISLDGLLFPRICQAQDPPDEKTQDQQSLSDVEGAYSRVEATRGAGGSSSRPPEKDSGLLDSVLDTLWAPSGPGQSQPSPPACEVTSSWCLFGPELPEDPPAAPATQRVLSPLMSRSGGKAGDSSGMAAAHKVLPRGLSPSRQLLLPTSGSPHWSGAPVKPSPQPAAVEVEEEDGSESEDSAGLLLKGKPRALGGAAAGGGAPAVTPGTAAGGIALVPKEDSRFSAPRVALVEQDAPMAPGRSPLATTVTDFIHVPILPLSHALLAARTRQLLEDESYDGGSGAASAFAPPRSSPSASSTPVPGSDFPDCAYAPDAEPKDDVYPLYGDFQPPALKIKEEEEGAEASTRSPRSYLVAGASPTTFPDFPLGPPPPLPPRAPPSRPGEAAVTAAPASASVSSASSSGSTLECILYKAEGAQPQQGPFAPPPCKAPGAGGCLLPRDSLPSTSASAGATAAGAAPALYPALGLNGLPQLGYQAAVIKEGLPQVYPPYLNYLRPDSETSQSPQYSFESLPQKICLICGDEASGCHYGVLTCGSCKVFFKRAMEGQHNYLCAGRNDCIVDKIRRKNCPACRLRKCCQAGMVLGGRKFKKFNKVRVMRALDAVALPQPVGIPNENQALSQRFTFSPSQDIQLIPPLINLLLSIEPDVIYAGHDNTKPDTSSSLLTSLNQLGERQLLSVVKWSKSLPGFRNLHIDDQITLIQYSWMSLMVFGLGWRSYKHVSGQMLYFAPDLILNEQRMKESSFYSLCLTMWQIPQEFVKLQVSQEEFLCMKVLLLLNTIPLEGLRSQTQFEEMRSSYIRELIKAIGLRQKGVVSSSQRFYQLTKLLDNLHDLVKQLHLYCLNTFIQSRALSVEFPEMMSEVIAAQLPKILAGMVKPLLFHKK.

The disordered stretch occupies residues 1-49 (MTELKAKGLRAPHVAGSPSSPKVGSPLPCRQATGQFPGSQTSDTLPEVS). The segment at 1-164 (MTELKAKGLR…PATQRVLSPL (164 aa)) is AF3; mediates transcriptional activation. Residues 1-568 (MTELKAKGLR…YSFESLPQKI (568 aa)) are modulating, Pro-Rich. S20 is modified (phosphoserine). Residues 32 to 44 (ATGQFPGSQTSDT) are compositionally biased toward polar residues. The LXXL motif 1 signature appears at 55-59 (LDGLL). The tract at residues 62-158 (RICQAQDPPD…EDPPAAPATQ (97 aa)) is disordered. Position 81 is a phosphoserine (S81). Residues 115–119 (LDTLW) carry the LXXL motif 2 motif. Residues S130 and S162 each carry the phosphoserine modification. The tract at residues 165–305 (MSRSGGKAGD…LATTVTDFIH (141 aa)) is mediates transcriptional transrepression. A Nuclear localization signal motif is present at residues 183–187 (KVLPR). The interval 187 to 233 (RGLSPSRQLLLPTSGSPHWSGAPVKPSPQPAAVEVEEEDGSESEDSA) is disordered. Position 190 is a phosphoserine (S190). Polar residues predominate over residues 191–203 (PSRQLLLPTSGSP). S213 is modified (phosphoserine). A compositionally biased stretch (acidic residues) spans 220-231 (EVEEEDGSESED). S294 carries the phosphoserine; by MAPK1 modification. The segment at 328–365 (SYDGGSGAASAFAPPRSSPSASSTPVPGSDFPDCAYAP) is disordered. Residues 335–356 (AASAFAPPRSSPSASSTPVPGS) are compositionally biased toward low complexity. The residue at position 345 (S345) is a Phosphoserine; by MAPK. K388 is covalently cross-linked (Glycyl lysine isopeptide (Lys-Gly) (interchain with G-Cter in SUMO); alternate). A Glycyl lysine isopeptide (Lys-Gly) (interchain with G-Cter in ubiquitin); alternate cross-link involves residue K388. A disordered region spans residues 390 to 452 (EEEGAEASTR…PASASVSSAS (63 aa)). Phosphoserine; by CDK2 is present on S400. Over residues 418 to 433 (PLGPPPPLPPRAPPSR) the composition is skewed to pro residues. Residues 434-452 (PGEAAVTAAPASASVSSAS) are compositionally biased toward low complexity. The segment at 456-548 (STLECILYKA…VYPPYLNYLR (93 aa)) is AF1; mediates transcriptional activation. K533 participates in a covalent cross-link: Glycyl lysine isopeptide (Lys-Gly) (interchain with G-Cter in SUMO). 2 NR C4-type zinc fingers span residues 569-589 (CLIC…CGSC) and 605-629 (CAGR…LRKC). A DNA-binding region (nuclear receptor) is located at residues 569–641 (CLICGDEASG…AGMVLGGRKF (73 aa)). Phosphoserine is present on S678. Residues 681 to 915 (QDIQLIPPLI…EFPEMMSEVI (235 aa)) enclose the NR LBD domain. Positions 689-935 (LINLLLSIEP…MVKPLLFHKK (247 aa)) are AF2; mediates transcriptional activation. R768 is a progesterone binding site.

This sequence belongs to the nuclear hormone receptor family. As to quaternary structure, interacts with SMARD1 and UNC45A. Interacts with CUEDC2; the interaction promotes ubiquitination, decreases sumoylation, and represses transcriptional activity. Interacts with PIAS3; the interaction promotes sumoylation of PR in a hormone-dependent manner, inhibits DNA-binding, and alters nuclear export. Interacts with SP1; the interaction requires ligand-induced phosphorylation on Ser-345 by ERK1/2-MAPK. Interacts with PRMT2. Interacts with NCOA2 and NCOA1. Interacts with KLF9. Interacts with GTF2B. Phosphorylated on multiple serine sites. Several of these sites are hormone-dependent. Phosphorylation on Ser-294 is highly hormone-dependent and modulates ubiquitination and sumoylation on Lys-388. Phosphorylation on Ser-345 also requires induction by hormone. Basal phosphorylation on Ser-81, Ser-162, Ser-190 and Ser-400 is increased in response to progesterone and can be phosphorylated in vitro by the CDK2-A1 complex. Increased levels of phosphorylation on Ser-400 also in the presence of EGF, heregulin, IGF, PMA and FBS. Phosphorylation at this site by CDK2 is ligand-independent, and increases nuclear translocation and transcriptional activity. Phosphorylation at Ser-162 and Ser-294, but not at Ser-190, is impaired during the G(2)/M phase of the cell cycle. Phosphorylation on Ser-345 by ERK1/2 MAPK is required for interaction with SP1. In terms of processing, sumoylation is hormone-dependent and represses transcriptional activity. Sumoylation on all three sites is enhanced by PIAS3. Desumoylated by SENP1. Sumoylation on Lys-388, the main site of sumoylation, is repressed by ubiquitination on the same site, and modulated by phosphorylation at Ser-294. Post-translationally, ubiquitination is hormone-dependent and represses sumoylation on the same site. Promoted by MAPK-mediated phosphorylation on Ser-294. Ubiquitinated by UBR5, leading to its degradation: UBR5 specifically recognizes and binds ligand-bound PGR when it is not associated with coactivators (NCOAs). In presence of NCOAs, the UBR5-degron is not accessible, preventing its ubiquitination and degradation. Palmitoylated by ZDHHC7 and ZDHHC21. Palmitoylation is required for plasma membrane targeting and for rapid intracellular signaling via ERK and AKT kinases and cAMP generation.

It localises to the nucleus. The protein localises to the cytoplasm. Functionally, the steroid hormones and their receptors are involved in the regulation of eukaryotic gene expression and affect cellular proliferation and differentiation in target tissues. Transcriptional activator of several progesteron-dependent promoters in a variety of cell types. Involved in activation of SRC-dependent MAPK signaling on hormone stimulation. The chain is Progesterone receptor (PGR) from Sapajus apella (Brown-capped capuchin).